We begin with the raw amino-acid sequence, 144 residues long: Large ribosomal subunit protein uL16 (144 aa).

Belongs to the universal ribosomal protein uL16 family. Part of the 50S ribosomal subunit.

Binds 23S rRNA and is also seen to make contacts with the A and possibly P site tRNAs. The chain is Large ribosomal subunit protein uL16 from Bacillus licheniformis (strain ATCC 14580 / DSM 13 / JCM 2505 / CCUG 7422 / NBRC 12200 / NCIMB 9375 / NCTC 10341 / NRRL NRS-1264 / Gibson 46).